Here is a 359-residue protein sequence, read N- to C-terminus: Protein RecA (359 aa).

74–81 (GPESSGKT) contributes to the ATP binding site.

The protein belongs to the RecA family.

It is found in the cytoplasm. In terms of biological role, can catalyze the hydrolysis of ATP in the presence of single-stranded DNA, the ATP-dependent uptake of single-stranded DNA by duplex DNA, and the ATP-dependent hybridization of homologous single-stranded DNAs. It interacts with LexA causing its activation and leading to its autocatalytic cleavage. In Anaplasma marginale (strain St. Maries), this protein is Protein RecA.